The primary structure comprises 381 residues: L-lactate dehydrogenase (381 aa).

One can recognise an FMN hydroxy acid dehydrogenase domain in the interval 1-380 (MIISASTDYR…SRDSLVRELG (380 aa)). Tyrosine 24 contributes to the substrate binding site. 2 residues coordinate FMN: serine 106 and glutamine 127. Position 129 (tyrosine 129) interacts with substrate. Threonine 155 contacts FMN. Residue arginine 164 coordinates substrate. Lysine 251 is a binding site for FMN. Histidine 275 acts as the Proton acceptor in catalysis. Arginine 278 is a binding site for substrate. Residue 306–330 (DSGIRSGLDVVRMIALGADTVLIGR) coordinates FMN.

This sequence belongs to the FMN-dependent alpha-hydroxy acid dehydrogenase family. In terms of assembly, homotetramer. It depends on FMN as a cofactor.

The protein localises to the cell inner membrane. It carries out the reaction (S)-lactate + A = pyruvate + AH2. Its function is as follows. Catalyzes the conversion of L-lactate to pyruvate. Is coupled to the respiratory chain. The sequence is that of L-lactate dehydrogenase from Pseudomonas putida (strain W619).